The following is a 448-amino-acid chain: Probable sodium-coupled neutral amino acid transporter 6 (448 aa).

Polar residues-rich tracts occupy residues 1–12 (MQASDSSINTLD) and 26–36 (LLANSPQRRSS). Positions 1–36 (MQASDSSINTLDGHQVSAGRDESTPLLANSPQRRSS) are disordered. Transmembrane regions (helical) follow at residues 40–60 (SFGF…ILGL), 69–89 (ILGF…SIHL), 117–137 (LVAC…LFII), 164–184 (LLII…KIGF), and 185–205 (LGYT…VIVI). A disulfide bond links Cys-212 and Cys-232. 2 N-linked (GlcNAc...) asparagine glycosylation sites follow: Asn-218 and Asn-228. Helical transmembrane passes span 244–264 (AFAL…LPIY), 281–301 (VGIA…YLTF), 321–341 (VLII…VPLI), 365–385 (ILVT…VPDM), 388–408 (VFGV…PGLF), and 425–445 (ACGL…LIIM).

This sequence belongs to the amino acid/polyamine transporter 2 family.

It localises to the cell membrane. In terms of biological role, probable sodium-dependent amino acid/proton antiporter, could be a neuronal transporter for glutamate. This chain is Probable sodium-coupled neutral amino acid transporter 6 (slc38a6), found in Xenopus tropicalis (Western clawed frog).